Here is a 101-residue protein sequence, read N- to C-terminus: MSSTLIVQLDMRTLCQEADVTAECVIEIVEHGIVEPSGRTPEDWLFDDQAPLVTKRAVKLHQELELEWEGVALALELLQEVQQLRSENNMLKQRLGRFIQM.

This sequence belongs to the CbpM family.

Interacts with CbpA and inhibits both the DnaJ-like co-chaperone activity and the DNA binding activity of CbpA. Together with CbpA, modulates the activity of the DnaK chaperone system. Does not inhibit the co-chaperone activity of DnaJ. This chain is Chaperone modulatory protein CbpM, found in Pseudomonas putida (strain ATCC 700007 / DSM 6899 / JCM 31910 / BCRC 17059 / LMG 24140 / F1).